The following is a 197-amino-acid chain: Phospholipid hydroperoxide glutathione peroxidase (197 aa).

Serine 40 is subject to Phosphoserine. The active site involves selenocysteine 73. Selenocysteine 73 is a non-standard amino acid (selenocysteine).

It belongs to the glutathione peroxidase family. In terms of assembly, monomer. Has a tendency to form higher mass oligomers. Interacts with FUNDC1; this interaction promotes GPX4 recruitment into mitochondria through TOM/TIM complex where it is degraded by mitophagy. Expressed in testis. Also expressed in liver, lung, kidney and spinal cord.

It is found in the mitochondrion. The protein localises to the cytoplasm. It carries out the reaction a hydroperoxy polyunsaturated fatty acid + 2 glutathione = a hydroxy polyunsaturated fatty acid + glutathione disulfide + H2O. It catalyses the reaction 2 glutathione + H2O2 = glutathione disulfide + 2 H2O. The enzyme catalyses tert-butyl hydroperoxide + 2 glutathione = tert-butanol + glutathione disulfide + H2O. The catalysed reaction is cumene hydroperoxide + 2 glutathione = 2-phenylpropan-2-ol + glutathione disulfide + H2O. It carries out the reaction (9S)-hydroperoxy-(10E,12Z)-octadecadienoate + 2 glutathione = (9S)-hydroxy-(10E,12Z)-octadecadienoate + glutathione disulfide + H2O. It catalyses the reaction (13S)-hydroperoxy-(9Z,11E)-octadecadienoate + 2 glutathione = (13S)-hydroxy-(9Z,11E)-octadecadienoate + glutathione disulfide + H2O. The enzyme catalyses (5S)-hydroperoxy-(6E,8Z,11Z,14Z)-eicosatetraenoate + 2 glutathione = (5S)-hydroxy-(6E,8Z,11Z,14Z)-eicosatetraenoate + glutathione disulfide + H2O. The catalysed reaction is (12R)-hydroperoxy-(5Z,8Z,10E,14Z)-eicosatetraenoate + 2 glutathione = (12R)-hydroxy-(5Z,8Z,10E,14Z)-eicosatetraenoate + glutathione disulfide + H2O. It carries out the reaction (12S)-hydroperoxy-(5Z,8Z,10E,14Z)-eicosatetraenoate + 2 glutathione = (12S)-hydroxy-(5Z,8Z,10E,14Z)-eicosatetraenoate + glutathione disulfide + H2O. It catalyses the reaction (15S)-hydroperoxy-(5Z,8Z,11Z,13E)-eicosatetraenoate + 2 glutathione = (15S)-hydroxy-(5Z,8Z,11Z,13E)-eicosatetraenoate + glutathione disulfide + H2O. The enzyme catalyses (5S)-hydroperoxy-(6E,8Z,11Z,14Z,17Z)-eicosapentaenoate + 2 glutathione = (5S)-hydroxy-(6E,8Z,11Z,14Z,17Z)-eicosapentaenoate + glutathione disulfide + H2O. The catalysed reaction is (12S)-hydroperoxy-(5Z,8Z,10E,14Z,17Z)-eicosapentaenoate + 2 glutathione = (12S)-hydroxy-(5Z,8Z,10E,14Z,17Z)-eicosapentaenoate + glutathione disulfide + H2O. It carries out the reaction (15S)-hydroperoxy-(5Z,8Z,11Z,13E,17Z)-eicosapentaenoate + 2 glutathione = (15S)-hydroxy-(5Z,8Z,11Z,13E,17Z)-eicosapentaenoate + glutathione disulfide + H2O. It catalyses the reaction (15S)-hydroperoxy-(11Z,13E)-eicosadienoate + 2 glutathione = (15S)-hydroxy-(11Z,13E)-eicosadienoate + glutathione disulfide + H2O. The enzyme catalyses (17S)-hydroperoxy-(4Z,7Z,10Z,13Z,15E,19Z)-docosahexaenoate + 2 glutathione = (17S)-hydroxy-(4Z,7Z,10Z,13Z,15E,19Z)-docosahexaenoate + glutathione disulfide + H2O. The catalysed reaction is a hydroperoxy-1,2-diacyl-glycero-3-phosphocholine + 2 glutathione = a hydroxy-1,2-diacyl-glycero-3-phosphocholine + glutathione disulfide + H2O. Essential antioxidant peroxidase that directly reduces phospholipid hydroperoxide even if they are incorporated in membranes and lipoproteins. Can also reduce fatty acid hydroperoxide, cholesterol hydroperoxide and thymine hydroperoxide. Plays a key role in protecting cells from oxidative damage by preventing membrane lipid peroxidation. Required to prevent cells from ferroptosis, a non-apoptotic cell death resulting from an iron-dependent accumulation of lipid reactive oxygen species. The presence of selenocysteine (Sec) versus Cys at the active site is essential for life: it provides resistance to overoxidation and prevents cells against ferroptosis. The presence of Sec at the active site is also essential for the survival of a specific type of parvalbumin-positive interneurons, thereby preventing against fatal epileptic seizures. May be required to protect cells from the toxicity of ingested lipid hydroperoxides. Required for normal sperm development and male fertility. Essential for maturation and survival of photoreceptor cells. Plays a role in a primary T-cell response to viral and parasitic infection by protecting T-cells from ferroptosis and by supporting T-cell expansion. Plays a role of glutathione peroxidase in platelets in the arachidonic acid metabolism. Reduces hydroperoxy ester lipids formed by a 15-lipoxygenase that may play a role as down-regulator of the cellular 15-lipoxygenase pathway. Can also reduce small soluble hydroperoxides such as H2O2, cumene hydroperoxide and tert-butyl hydroperoxide. In Callithrix jacchus (White-tufted-ear marmoset), this protein is Phospholipid hydroperoxide glutathione peroxidase.